The chain runs to 25 residues: Histone H1.1 (25 aa).

Residues 1–25 (MVSEAIAALKEREGSSEFAIGKKKE) form the H15 domain. The tract at residues 1-25 (MVSEAIAALKEREGSSEFAIGKKKE) is disordered. Positions 9–25 (LKEREGSSEFAIGKKKE) are enriched in basic and acidic residues.

It localises to the nucleus. The protein localises to the chromosome. In terms of biological role, histones H1 are necessary for the condensation of nucleosome chains into higher-order structures. The protein is Histone H1.1 of Triticum aestivum (Wheat).